We begin with the raw amino-acid sequence, 1077 residues long: RNA polymerase-associated protein CTR9 (1077 aa).

16 TPR repeats span residues 56–89 (KEHW…FQNS), 138–174 (IGNM…EDHR), 183–216 (CLFL…NPVL), 218–251 (PDPR…NPKN), 298–332 (PVLL…SPMI), 338–371 (SESS…NEDN), 373–405 (LAKL…NESL), 421–455 (FDAK…TLAT), 462–495 (SRAY…MEFI), 501–534 (LEVL…VSDK), 540–572 (ITLE…HPAY), 664–697 (GKKS…DPFN), 699–731 (FAAQ…LDNE), 732–764 (DVQL…FDNE), 768–801 (PHIL…AKTA), and 830–863 (AETL…FREL). A compositionally biased stretch (basic and acidic residues) spans 959–980 (EREAMAISEHNVKDDSDLSDKD). Positions 959 to 1077 (EREAMAISEH…NDNDDNDGLF (119 aa)) are disordered. A phosphoserine mark is found at Ser-1015 and Ser-1017. Acidic residues-rich tracts occupy residues 1042–1051 (FIEDSDEEEA) and 1063–1077 (DNDE…DGLF).

In terms of assembly, component of the PAF1 complex which consists of at least CDC73, CTR9, LEO1, PAF1 and RTF1. Interacts with SPT6. Interacts with FACT subunits POB3 and SPT16.

It is found in the nucleus. The protein localises to the nucleoplasm. In terms of biological role, the PAF1 complex is a multifunctional complex. Involved in transcription initiation via genetic interactions with TATA-binding proteins. Involved in elongation. It regulates 3'-end formation of snR47 by modulating the recruitment or stable association of NRD1 and NAB3 with RNA polymerase II. Also has a role in transcription-coupled histone modification. Required for activation of RAD6 ubiquitin conjugate and the BRE1 ubiquitin ligase which ubiquitinate 'Lys-126' histone H2B. Activates the SET1 histone methyltransferase complex for methylation of 'Lys-4' of histone H3 and for methylation of 'Lys-73' of histone H3 by DOT1 and 'Lys-36' of histone H3 by SET2. In complex with PAF1, required for normal CLN1 and CLN2 G1 cyclin expression in late G1. Also has a role in chromosome segregation where it appears to be involved in microtubule placement. This Saccharomyces cerevisiae (strain ATCC 204508 / S288c) (Baker's yeast) protein is RNA polymerase-associated protein CTR9 (CTR9).